A 148-amino-acid chain; its full sequence is HTH-type transcriptional regulator Rv2324 (148 aa).

One can recognise an HTH asnC-type domain in the interval Leu-4–Asn-65. Residues Phe-23–Asp-42 constitute a DNA-binding region (H-T-H motif).

As to quaternary structure, homodimer. Forms oligomers.

Its activity is regulated as follows. The DNA-binding activity of Rv2324 is modulated by interaction of Rv2324 with amino acids. Aspartate is the only effector amino acid that completely abolishes DNA binding. The majority of amino acids induce a dimer-tetramer or dimer-hexamer oligomeric transition. In response to amino-acid binding, adopts an open quaternary association, which is a part of the functional requirement to bind to non-symmetrically distributed target DNA binding sites. Its function is as follows. Transcriptional regulator involved in growth, DNA replication and damage control. Plays a crucial role in regulating survival and growth of M.tuberculosis. Could function as a global regulator in both the latent/persistent and active phases of growth. Binds to its own promoter region and to promoters of multiple metabolic genes, such as serB2, lat, ald and roc operon. In vitro, interacts with intrinsically curved and non-curved DNA molecules, and with both supercoiled and linear DNA, with higher affinity for supercoiled DNA. Binds to DNA recombination, replication and repair intermediates. The chain is HTH-type transcriptional regulator Rv2324 from Mycobacterium tuberculosis (strain ATCC 25618 / H37Rv).